The chain runs to 110 residues: MKGRRPSHRRQLIPPLLTGLRVKVLAHSDPSLEGLEGWVVVEEARSLRILTLEGRVSTVLKDLAVIEVEAPGGEYIRISGRVLIGNPLDRVKEYRWRVSRRCRSSSRLKT.

It belongs to the eukaryotic/archaeal RNase P protein component 1 family. Consists of a catalytic RNA component and at least 4-5 protein subunits.

It localises to the cytoplasm. It carries out the reaction Endonucleolytic cleavage of RNA, removing 5'-extranucleotides from tRNA precursor.. Its function is as follows. Part of ribonuclease P, a protein complex that generates mature tRNA molecules by cleaving their 5'-ends. In Aeropyrum pernix (strain ATCC 700893 / DSM 11879 / JCM 9820 / NBRC 100138 / K1), this protein is Ribonuclease P protein component 1.